The following is a 243-amino-acid chain: Carboxy-S-adenosyl-L-methionine synthase (243 aa).

Residues Tyr40, 65 to 67, 90 to 91, 118 to 119, Asn133, and Arg200 each bind S-adenosyl-L-methionine; these read GCS, DN, and DI.

It belongs to the class I-like SAM-binding methyltransferase superfamily. Cx-SAM synthase family. As to quaternary structure, homodimer.

It catalyses the reaction prephenate + S-adenosyl-L-methionine = carboxy-S-adenosyl-L-methionine + 3-phenylpyruvate + H2O. Its function is as follows. Catalyzes the conversion of S-adenosyl-L-methionine (SAM) to carboxy-S-adenosyl-L-methionine (Cx-SAM). The chain is Carboxy-S-adenosyl-L-methionine synthase from Shewanella loihica (strain ATCC BAA-1088 / PV-4).